The sequence spans 677 residues: Methionine--tRNA ligase (677 aa).

Positions 15-25 (PYANGSIHLGH) match the 'HIGH' region motif. Zn(2+) is bound by residues Cys146, Cys149, Cys159, and Cys162. The 'KMSKS' region motif lies at 333-337 (KMSKS). Residue Lys336 participates in ATP binding. The 103-residue stretch at 575–677 (DFAKVDLRVA…DGAKPGQQVK (103 aa)) folds into the tRNA-binding domain.

The protein belongs to the class-I aminoacyl-tRNA synthetase family. MetG type 1 subfamily. In terms of assembly, homodimer. Requires Zn(2+) as cofactor.

It is found in the cytoplasm. The enzyme catalyses tRNA(Met) + L-methionine + ATP = L-methionyl-tRNA(Met) + AMP + diphosphate. Is required not only for elongation of protein synthesis but also for the initiation of all mRNA translation through initiator tRNA(fMet) aminoacylation. The polypeptide is Methionine--tRNA ligase (Klebsiella pneumoniae subsp. pneumoniae (strain ATCC 700721 / MGH 78578)).